The chain runs to 92 residues: DNA-binding protein HU (92 aa).

Belongs to the bacterial histone-like protein family. In terms of assembly, homodimer.

Functionally, histone-like DNA-binding protein which is capable of wrapping DNA to stabilize it, and thus to prevent its denaturation under extreme environmental conditions. This Buchnera aphidicola subsp. Baizongia pistaciae (strain Bp) protein is DNA-binding protein HU (hup).